Reading from the N-terminus, the 78-residue chain is Large ribosomal subunit protein bL28 (78 aa).

The protein belongs to the bacterial ribosomal protein bL28 family.

This Trichormus variabilis (strain ATCC 29413 / PCC 7937) (Anabaena variabilis) protein is Large ribosomal subunit protein bL28.